A 506-amino-acid chain; its full sequence is Bifunctional purine biosynthesis protein PurH (506 aa).

The 146-residue stretch at 1 to 146 (MARLALLSVS…KNFAHLTVLC (146 aa)) folds into the MGS-like domain.

The protein belongs to the PurH family.

The catalysed reaction is (6R)-10-formyltetrahydrofolate + 5-amino-1-(5-phospho-beta-D-ribosyl)imidazole-4-carboxamide = 5-formamido-1-(5-phospho-D-ribosyl)imidazole-4-carboxamide + (6S)-5,6,7,8-tetrahydrofolate. The enzyme catalyses IMP + H2O = 5-formamido-1-(5-phospho-D-ribosyl)imidazole-4-carboxamide. Its pathway is purine metabolism; IMP biosynthesis via de novo pathway; 5-formamido-1-(5-phospho-D-ribosyl)imidazole-4-carboxamide from 5-amino-1-(5-phospho-D-ribosyl)imidazole-4-carboxamide (10-formyl THF route): step 1/1. The protein operates within purine metabolism; IMP biosynthesis via de novo pathway; IMP from 5-formamido-1-(5-phospho-D-ribosyl)imidazole-4-carboxamide: step 1/1. The chain is Bifunctional purine biosynthesis protein PurH from Trichormus variabilis (strain ATCC 29413 / PCC 7937) (Anabaena variabilis).